A 359-amino-acid chain; its full sequence is Peptide chain release factor 1 (359 aa).

Glutamine 236 carries the N5-methylglutamine modification.

It belongs to the prokaryotic/mitochondrial release factor family. Post-translationally, methylated by PrmC. Methylation increases the termination efficiency of RF1.

The protein localises to the cytoplasm. Its function is as follows. Peptide chain release factor 1 directs the termination of translation in response to the peptide chain termination codons UAG and UAA. The polypeptide is Peptide chain release factor 1 (Streptococcus pyogenes serotype M12 (strain MGAS2096)).